We begin with the raw amino-acid sequence, 346 residues long: tRNA N6-adenosine threonylcarbamoyltransferase (346 aa).

Histidine 111 and histidine 115 together coordinate Fe cation. Residues 134–138 (LVSGG), aspartate 167, glycine 180, and asparagine 279 each bind substrate. Aspartate 307 contributes to the Fe cation binding site.

The protein belongs to the KAE1 / TsaD family. It depends on Fe(2+) as a cofactor.

The protein localises to the cytoplasm. It catalyses the reaction L-threonylcarbamoyladenylate + adenosine(37) in tRNA = N(6)-L-threonylcarbamoyladenosine(37) in tRNA + AMP + H(+). Functionally, required for the formation of a threonylcarbamoyl group on adenosine at position 37 (t(6)A37) in tRNAs that read codons beginning with adenine. Is involved in the transfer of the threonylcarbamoyl moiety of threonylcarbamoyl-AMP (TC-AMP) to the N6 group of A37, together with TsaE and TsaB. TsaD likely plays a direct catalytic role in this reaction. The sequence is that of tRNA N6-adenosine threonylcarbamoyltransferase from Burkholderia mallei (strain ATCC 23344).